The chain runs to 116 residues: Dynein light chain Tctex-type 3 (116 aa).

Tyr4 carries the 3'-nitrotyrosine modification.

Belongs to the dynein light chain Tctex-type family. In terms of assembly, homodimer. The cytoplasmic dynein 1 complex consists of two catalytic heavy chains (HCs) and a number of non-catalytic subunits presented by intermediate chains (ICs), light intermediate chains (LICs) and light chains (LCs); the composition seems to vary in respect to the IC, LIC and LC composition. The heavy chain homodimer serves as a scaffold for the probable homodimeric assembly of the respective non-catalytic subunits. The ICs and LICs bind directly to the HC dimer and the LCs assemble on the IC dimer. DYNLT1 and DYNLT3 compete for association with dynein IC (DYNC1I1 or DYNC1I2). Self-associates. Interacts with DYNC1I1 and DYNC1I2. Interacts with BUB3. Interacts with SATB1 in nucleus to form complex with matrix attachment regions (MARs) of DNA.

Its subcellular location is the nucleus. It is found in the cytoplasm. The protein resides in the cytoskeleton. It localises to the chromosome. The protein localises to the centromere. Its subcellular location is the kinetochore. Its function is as follows. Acts as one of several non-catalytic accessory components of the cytoplasmic dynein 1 complex that are thought to be involved in linking dynein to cargos and to adapter proteins that regulate dynein function. Cytoplasmic dynein 1 acts as a motor for the intracellular retrograde motility of vesicles and organelles along microtubules. Probably binds BUB3 as part of transport cargo. Required for the efficient progression through mitosis. This chain is Dynein light chain Tctex-type 3 (DYNLT3), found in Canis lupus familiaris (Dog).